The primary structure comprises 448 residues: Protein kinase C and casein kinase substrate in neurons protein 2 (448 aa).

In terms of domain architecture, F-BAR spans 11-282 (VEVSSDSFWE…NIKTADAVED (272 aa)). The stretch at 25-274 (KRTVKRIDDG…NIYRELEQNI (250 aa)) forms a coiled coil. The disordered stretch occupies residues 315–386 (SRREKKKASD…DTNPFDEDTS (72 aa)). The span at 329-358 (TGINQTGDQVSQPNKHSSVSSYEKNQSYPT) shows a compositional bias: polar residues. An NPF1 motif is present at residues 367–369 (NPF). Positions 379–381 (NPF) match the NPF2 motif. The region spanning 388 to 448 (VMEVRVRALY…YPANYVEPIQ (61 aa)) is the SH3 domain.

This sequence belongs to the PACSIN family. Post-translationally, phosphorylated on serine residues. Detected in intestine, cardiac muscle, lung and brain (at protein level). Expressed in all tissues tested, including, gizzard, liver, cardiac muscle, skeletal muscle and skin.

The protein localises to the cytoplasm. Its subcellular location is the cytoskeleton. It is found in the cytoplasmic vesicle membrane. The protein resides in the cell projection. It localises to the ruffle membrane. The protein localises to the early endosome. Its subcellular location is the recycling endosome membrane. It is found in the cell membrane. The protein resides in the membrane. It localises to the caveola. The protein localises to the cell junction. Its subcellular location is the focal adhesion. Functionally, regulates the morphogenesis and endocytosis of caveolae. Lipid-binding protein that is able to promote the tubulation of the phosphatidic acid-containing membranes it preferentially binds. Plays a role in intracellular vesicle-mediated transport. Involved in the endocytosis of cell-surface receptors like the EGF receptor, contributing to its internalization in the absence of EGF stimulus. Essential for endothelial organization in sprouting angiogenesis, modulates CDH5-based junctions. Facilitates endothelial front-rear polarity during migration by recruiting EHD4 and MICALL1 to asymmetric adherens junctions between leader and follower cells. The chain is Protein kinase C and casein kinase substrate in neurons protein 2 (PACSIN2) from Gallus gallus (Chicken).